The primary structure comprises 278 residues: TIMELESS-interacting protein (278 aa).

The interval 1-59 (MLEQEENGLFEIPDYEHVEDETFPPFPPPASPERDPADAEPEEGSGSGVPVPPKRTVKR) is disordered. Positions 64-140 (LDATRLTSER…KEVQTCLKRI (77 aa)) are interaction with TIMELESS. Disordered stretches follow at residues 155-197 (NDEV…EEQQ) and 216-278 (LSNS…TNLD). 2 positions are modified to phosphoserine: S191 and S219. The span at 226–239 (VTVEENSTGEDQEE) shows a compositional bias: acidic residues. Residue T233 is modified to Phosphothreonine. A compositionally biased stretch (basic and acidic residues) spans 259–278 (THEEEQCKAEETQLDHTNLD).

This sequence belongs to the CSM3 family. As to quaternary structure, interacts with MCM6 and MCM7. Interacts with TIMELESS (via N-terminus), which impairs TIMELESS self-association. Interacts with RPA2 and PRDX2. As to expression, expressed in brain.

It is found in the cytoplasm. Its subcellular location is the nucleus. In terms of biological role, plays an important role in the control of DNA replication and the maintenance of replication fork stability. Important for cell survival after DNA damage or replication stress. May be specifically required for the ATR-CHEK1 pathway in the replication checkpoint induced by hydroxyurea or ultraviolet light. Forms a complex with TIMELESS and this complex regulates DNA replication processes under both normal and stress conditions, stabilizes replication forks and influences both CHEK1 phosphorylation and the intra-S phase checkpoint in response to genotoxic stress. In Mus musculus (Mouse), this protein is TIMELESS-interacting protein (Tipin).